Reading from the N-terminus, the 192-residue chain is MSEITLPEYQSIAAELKSASLAVTPAELHGLLVGMLSGGLAINDQTWQPILFDYTNEGMGWPSSALGLAQSVFQVTVNELTGTSMELSLLLPDEAGEEGLFALADGVSDFVNHFISGMGLAGIAIYKASDDAKEALTDLEEIAKLGIDEDDDLGEQALLLEQVIEHVKACVLTIHAEFGARPESNENKPTIH.

Belongs to the UPF0149 family.

The protein is UPF0149 protein VIBHAR_03551 of Vibrio campbellii (strain ATCC BAA-1116).